A 240-amino-acid polypeptide reads, in one-letter code: Uridylate kinase (240 aa).

ATP is bound at residue 13–16; it reads KLSG. The interval 21–26 is involved in allosteric activation by GTP; the sequence is GEKGFG. G55 serves as a coordination point for UMP. The ATP site is built by G56 and R60. Residues D75 and 136–143 contribute to the UMP site; that span reads IGNPYFST. ATP-binding residues include N164, Y170, and D173.

It belongs to the UMP kinase family. As to quaternary structure, homohexamer.

The protein localises to the cytoplasm. The catalysed reaction is UMP + ATP = UDP + ADP. The protein operates within pyrimidine metabolism; CTP biosynthesis via de novo pathway; UDP from UMP (UMPK route): step 1/1. Allosterically activated by GTP. Inhibited by UTP. Functionally, catalyzes the reversible phosphorylation of UMP to UDP. The protein is Uridylate kinase of Staphylococcus aureus (strain USA300).